A 319-amino-acid polypeptide reads, in one-letter code: uncharacterized protein (319 aa).

A disordered region spans residues 281-319 (KVERKQRRRDDQNIMRSKLPQQRQNPFCSTERPKRARCD). Over residues 299 to 308 (LPQQRQNPFC) the composition is skewed to polar residues.

It is found in the cytoplasm. It localises to the nucleus. This is an uncharacterized protein from Saccharomyces cerevisiae (strain ATCC 204508 / S288c) (Baker's yeast).